The chain runs to 219 residues: Small ribosomal subunit protein uS3c (219 aa).

The region spanning 39 to 111 (IRKFLMEKIK…NSFFNVKINF (73 aa)) is the KH type-2 domain.

It belongs to the universal ribosomal protein uS3 family. Part of the 30S ribosomal subunit.

It is found in the plastid. The protein is Small ribosomal subunit protein uS3c (rps3) of Euglena longa (Euglenophycean alga).